The sequence spans 729 residues: Ribosomal RNA large subunit methyltransferase K/L (729 aa).

Residues 47–158 (TFYRLCLWSR…KNELTLALDL (112 aa)) enclose the THUMP domain.

It belongs to the methyltransferase superfamily. RlmKL family.

It is found in the cytoplasm. The enzyme catalyses guanosine(2445) in 23S rRNA + S-adenosyl-L-methionine = N(2)-methylguanosine(2445) in 23S rRNA + S-adenosyl-L-homocysteine + H(+). The catalysed reaction is guanosine(2069) in 23S rRNA + S-adenosyl-L-methionine = N(2)-methylguanosine(2069) in 23S rRNA + S-adenosyl-L-homocysteine + H(+). Functionally, specifically methylates the guanine in position 2445 (m2G2445) and the guanine in position 2069 (m7G2069) of 23S rRNA. The sequence is that of Ribosomal RNA large subunit methyltransferase K/L from Dichelobacter nodosus (strain VCS1703A).